A 426-amino-acid chain; its full sequence is Docking protein 3 (426 aa).

One can recognise a PH domain in the interval 4–115 (PVKDGIIYVQ…WIEQLCQLAF (112 aa)). Residues 145–249 (DLTEFPVLVL…ACQQQGQESP (105 aa)) enclose the IRS-type PTB domain. The tract at residues 243 to 282 (QQGQESPQPSAQGLSNQPWGAEAEDPQCSPTLGRAHSGSH) is disordered. Polar residues predominate over residues 247 to 260 (ESPQPSAQGLSNQP). Tyrosine 331 carries the post-translational modification Phosphotyrosine. The disordered stretch occupies residues 357-426 (GCRQAPEGHS…RDGPGARDWS (70 aa)). A compositionally biased stretch (basic residues) spans 402–411 (KPQRTLRAKL).

The protein belongs to the DOK family. Type A subfamily. As to quaternary structure, homooligomer. Interacts with GRB2 and INPP5D/SHIP. Post-translationally, tyrosine-phosphorylated in the presence of GRB2.

It localises to the cytoplasm. The protein localises to the cell membrane. Its function is as follows. DOK proteins are enzymatically inert adaptor or scaffolding proteins. They provide a docking platform for the assembly of multimolecular signaling complexes. Plays a role as negative regulator of the mobilization of calcium ions and of calcium signaling. The sequence is that of Docking protein 3 (DOK3) from Gallus gallus (Chicken).